A 385-amino-acid polypeptide reads, in one-letter code: Phospho-N-acetylmuramoyl-pentapeptide-transferase (385 aa).

10 helical membrane passes run 23–43 (FITV…LGAG), 79–99 (MGGI…GAVA), 103–123 (VWLS…DDYV), 135–155 (AWYK…VLYF), 186–206 (LGVD…VTAV), 218–238 (GLTT…VYVS), 258–278 (LTVF…YNGY), 282–302 (VFMG…TILM), 307–327 (LLLP…IVQT), and 362–382 (KIVT…LLIL).

Belongs to the glycosyltransferase 4 family. MraY subfamily. The cofactor is Mg(2+).

The protein localises to the cell inner membrane. The enzyme catalyses UDP-N-acetyl-alpha-D-muramoyl-L-alanyl-gamma-D-glutamyl-meso-2,6-diaminopimeloyl-D-alanyl-D-alanine + di-trans,octa-cis-undecaprenyl phosphate = di-trans,octa-cis-undecaprenyl diphospho-N-acetyl-alpha-D-muramoyl-L-alanyl-D-glutamyl-meso-2,6-diaminopimeloyl-D-alanyl-D-alanine + UMP. It functions in the pathway cell wall biogenesis; peptidoglycan biosynthesis. Its function is as follows. Catalyzes the initial step of the lipid cycle reactions in the biosynthesis of the cell wall peptidoglycan: transfers peptidoglycan precursor phospho-MurNAc-pentapeptide from UDP-MurNAc-pentapeptide onto the lipid carrier undecaprenyl phosphate, yielding undecaprenyl-pyrophosphoryl-MurNAc-pentapeptide, known as lipid I. In Salinibacter ruber (strain DSM 13855 / M31), this protein is Phospho-N-acetylmuramoyl-pentapeptide-transferase.